A 172-amino-acid chain; its full sequence is MSSKKAKTKTTKKRPQRATSNVFAMFDQSQIQEFKEAFNMIDQNRDGFIDKEDLHDMLASLGKNPTDAYLDAMMNEAPGRINFTMFLTMFGEKLNGTDPEDVIRNAFACFDEEATGTIQEDYLRELLTTMGDRFTDEEVDELYREAPIDKKGNFNYIEFTRILKHGAKDKDD.

Positions 1–16 are enriched in basic residues; that stretch reads MSSKKAKTKTTKKRPQ. Positions 1–20 are disordered; the sequence is MSSKKAKTKTTKKRPQRATS. Thr-19 is modified (phosphothreonine; by MLCK and ZIPK/DAPK3). Residue Ser-20 is modified to Phosphoserine; by MLCK and ZIPK/DAPK3. 3 consecutive EF-hand domains span residues 29–64, 98–133, and 134–169; these read SQIQ…LGKN, DPED…MGDR, and FTDE…GAKD. Ca(2+) is bound by residues Asp-42, Asn-44, Asp-46, and Asp-53.

In terms of assembly, myosin is a hexamer of 2 heavy chains and 4 light chains: interacts with myosin heavy chain MYO19. Post-translationally, phosphorylation increases the actin-activated myosin ATPase activity and thereby regulates the contractile activity. It is required to generate the driving force in the migration of the cells but not necessary for localization of myosin-2 at the leading edge. Phosphorylation is reduced following epigallocatechin-3-O-gallate treatment.

Myosin regulatory subunit that plays an important role in regulation of both smooth muscle and nonmuscle cell contractile activity via its phosphorylation. Phosphorylation triggers actin polymerization in vascular smooth muscle. Implicated in cytokinesis, receptor capping, and cell locomotion. In Rattus norvegicus (Rat), this protein is Myosin regulatory light chain 12B (Myl12b).